The sequence spans 417 residues: Vacuolar cation/proton exchanger 3 (417 aa).

Over 1-45 (MENPQIEMGAFKANGPQLQNGGLRSSMVQSWNLQRFVESALRSIR) the chain is Cytoplasmic. A helical membrane pass occupies residues 46-66 (IVIFTSKLNLLLPFGPASIIL). The Extracellular portion of the chain corresponds to 67–73 (HYTTSRH). Residues 74 to 94 (GLVFLFSMLGITPLAERLGYA) form a helical membrane-spanning segment. Over 95 to 105 (TEQLAIYTGPT) the chain is Cytoplasmic. The chain crosses the membrane as a helical span at residues 106–126 (VGGLLNATFGNATEMIIAIYA). Positions 115 to 150 (GNATEMIIAIYALKNGMIRVVQQSLLGSILSNMLLV) are cation selection. The Extracellular segment spans residues 127 to 140 (LKNGMIRVVQQSLL). A helical membrane pass occupies residues 141-161 (GSILSNMLLVMGCAFFAGGIV). Topologically, residues 162–173 (HRNKDQVFSKAT) are cytoplasmic. The helical transmembrane segment at 174–194 (AVVNSGLLLMAVMGLMFPAVL) threads the bilayer. Over 195–207 (HFTHSEVRQGASE) the chain is Extracellular. A helical membrane pass occupies residues 208–230 (VSLSRFSSCIMLVAYASYLYFQL). Residues 231–258 (SGRNNAYSPIGSEEMPNEDAAEEDEESE) lie on the Cytoplasmic side of the membrane. The chain crosses the membrane as a helical span at residues 259–279 (IGMWESIAWLAMLTLWVSILS). The Extracellular portion of the chain corresponds to 280–291 (EYLVNAIEGASD). A helical membrane pass occupies residues 292 to 312 (SLNLPVAFISVILLPIVGNAA). Positions 309–344 (GNAAEHASAIMFAMKDKLDITLGVAIGSSTQISMFV) are cation selection. Residues 313–330 (EHASAIMFAMKDKLDITL) are Cytoplasmic-facing. A helical transmembrane segment spans residues 331–351 (GVAIGSSTQISMFVIPFCVVI). Residues 352-360 (GWMMGQKMD) are Extracellular-facing. The chain crosses the membrane as a helical span at residues 361–381 (LNFQLFETATLFITVLVVAFM). The Cytoplasmic segment spans residues 382-389 (LQDGVANY). Residues 390-410 (LKGLMLILCYLIVAASFFVHV) traverse the membrane as a helical segment. The Extracellular portion of the chain corresponds to 411-417 (DPQSSDD).

It belongs to the Ca(2+):cation antiporter (CaCA) (TC 2.A.19) family. Cation/proton exchanger (CAX) subfamily. In terms of tissue distribution, ubiquitous.

The protein resides in the vacuole membrane. In terms of biological role, vacuolar cation/proton exchanger (CAX). Translocates Ca(2+) and other metal ions into vacuoles using the proton gradient formed by H(+)-ATPase and H(+)-pyrophosphatase. The chain is Vacuolar cation/proton exchanger 3 (CAX3) from Oryza sativa subsp. japonica (Rice).